The following is a 64-amino-acid chain: Large ribosomal subunit protein bL35 (64 aa).

The protein belongs to the bacterial ribosomal protein bL35 family.

In Ureaplasma urealyticum serovar 10 (strain ATCC 33699 / Western), this protein is Large ribosomal subunit protein bL35.